A 209-amino-acid polypeptide reads, in one-letter code: Glutathione S-transferase D1 (209 aa).

Residues 1–81 enclose the GST N-terminal domain; the sequence is MVDFYYLPGS…YLVEKYGKTD (81 aa). Glutathione contacts are provided by residues serine 10, 51–53, and 65–67; these read HTI and ESR. Residues 87-208 form the GST C-terminal domain; it reads CPKKRAVINQ…AGCLEFKKYF (122 aa).

This sequence belongs to the GST superfamily. Delta family. In terms of assembly, homodimer.

It carries out the reaction RX + glutathione = an S-substituted glutathione + a halide anion + H(+). It catalyses the reaction 1,1,1-trichloro-2,2-bis(4-chlorophenyl)ethane = 1,1-dichloro-2,2-bis(4-chlorophenyl)ethylene + chloride + H(+). Functionally, conjugation of reduced glutathione to a wide number of exogenous and endogenous hydrophobic electrophiles. Has DDT dehydrochlorinase activity. May be involved in detoxification. In Drosophila melanogaster (Fruit fly), this protein is Glutathione S-transferase D1.